The chain runs to 373 residues: Cell division protein FtsZ 1 (373 aa).

GTP contacts are provided by residues 51–55 (GAGCN), 138–140 (GTG), glutamate 169, arginine 173, and aspartate 216. The segment at 354-373 (EESYFGEEERRPIKLDLDEL) is disordered. Residues 360-373 (EEERRPIKLDLDEL) are compositionally biased toward basic and acidic residues.

It belongs to the FtsZ family. Homodimer. Polymerizes to form a dynamic ring structure in a strictly GTP-dependent manner. Interacts directly with several other division proteins.

The protein resides in the cytoplasm. In terms of biological role, essential cell division protein that forms a contractile ring structure (Z ring) at the future cell division site. The regulation of the ring assembly controls the timing and the location of cell division. One of the functions of the FtsZ ring is to recruit other cell division proteins to the septum to produce a new cell wall between the dividing cells. Binds GTP and shows GTPase activity. The chain is Cell division protein FtsZ 1 from Thermococcus kodakarensis (strain ATCC BAA-918 / JCM 12380 / KOD1) (Pyrococcus kodakaraensis (strain KOD1)).